A 352-amino-acid polypeptide reads, in one-letter code: MDYQVSSPIYDINYYTSEPCQKINVKQIAARLLPPLYSLVFIFGFVGNMLVILILINCKRLKSMTDIYLLNLAISDLFFLLTVPFWAHYAAAQWDFGNTMCQLLTGLYFIGFFSGIFFIILLTIDRYLAVVHAVFALKARTVTFGVVTSVITWVVAVFASLPGIIFTRSQKEGLHYTCSSHFPYSQYQFWKNFQTLKIVILGLVLPLLVMVICYSGILKTLLRCRNEKKRHRAVRLIFTIMIVYFLFWAPYNIVLLLNTFQEFFGLNNCSSSNRLDQAMQVTETLGMTHCCINPIIYAFVGEKFRNYLLVFFQKHIAKRFCKCCSIFQQEAPERASSVYTRSTGEQEISVGL.

Over Met-1–Ala-30 the chain is Extracellular. Tyr-3 is modified (sulfotyrosine). Residues Ser-6 and Ser-7 are each glycosylated (O-linked (GalNAc...) serine). 3 positions are modified to sulfotyrosine: Tyr-10, Tyr-14, and Tyr-15. Cystine bridges form between Cys-20-Cys-269 and Cys-101-Cys-178. The helical transmembrane segment at Arg-31–Cys-58 threads the bilayer. Residues Lys-59–Tyr-68 lie on the Cytoplasmic side of the membrane. The chain crosses the membrane as a helical span at residues Leu-69–Tyr-89. Over Ala-90–Gln-102 the chain is Extracellular. A helical membrane pass occupies residues Leu-103 to Ile-124. The Cytoplasmic segment spans residues Asp-125–Thr-141. A helical membrane pass occupies residues Val-142–Phe-166. The Extracellular segment spans residues Thr-167–Ile-198. Residues Val-199–Leu-218 form a helical membrane-spanning segment. At Lys-219 to Arg-235 the chain is on the cytoplasmic side. The chain crosses the membrane as a helical span at residues Leu-236–Phe-260. At Gln-261–Gln-277 the chain is on the extracellular side. The chain crosses the membrane as a helical span at residues Ala-278–Gly-301. Residues Glu-302–Leu-352 lie on the Cytoplasmic side of the membrane. 3 S-palmitoyl cysteine lipidation sites follow: Cys-321, Cys-323, and Cys-324. 4 positions are modified to phosphoserine; by BARK1: Ser-336, Ser-337, Ser-342, and Ser-349.

Belongs to the G-protein coupled receptor 1 family. Interacts with PRAF2. Efficient ligand binding to CCL3/MIP-1alpha and CCL4/MIP-1beta requires sulfation, O-glycosylation and sialic acid modifications. Glycosylation on Ser-6 is required for efficient binding of CCL4. Interacts with GRK2. Interacts with ARRB1 and ARRB2. Interacts with CNIH4. Interacts with S100A4; this interaction stimulates T-lymphocyte chemotaxis. In terms of assembly, (Microbial infection) Interacts with HIV-1 surface protein gp120. As to quaternary structure, (Microbial infection) May interact with human cytomegalovirus/HHV-5 protein UL78. Post-translationally, sulfated on at least 2 of the N-terminal tyrosines. Sulfation contributes to the efficiency of HIV-1 entry and is required for efficient binding of the chemokines, CCL3 and CCL4. In terms of processing, O-glycosylated, but not N-glycosylated. Ser-6 appears to be the major site even if Ser-7 may be also O-glycosylated. Also sialylated glycans present which contribute to chemokine binding. Thr-16 and Ser-17 may also be glycosylated and, if so, with small moieties such as a T-antigen. Palmitoylation in the C-terminal is important for cell surface expression, and to a lesser extent, for HIV entry. Post-translationally, phosphorylation on serine residues in the C-terminal is stimulated by binding CC chemokines especially by APO-RANTES. Highly expressed in spleen, thymus, in the myeloid cell line THP-1, in the promyeloblastic cell line KG-1a and on CD4+ and CD8+ T-cells. Medium levels in peripheral blood leukocytes and in small intestine. Low levels in ovary and lung.

The protein localises to the cell membrane. Its function is as follows. Receptor for a number of inflammatory CC-chemokines including CCL3/MIP-1-alpha, CCL4/MIP-1-beta and RANTES and subsequently transduces a signal by increasing the intracellular calcium ion level. May play a role in the control of granulocytic lineage proliferation or differentiation. Participates in T-lymphocyte migration to the infection site by acting as a chemotactic receptor. In terms of biological role, (Microbial infection) Acts as a coreceptor (CD4 being the primary receptor) of human immunodeficiency virus-1/HIV-1. This chain is C-C chemokine receptor type 5, found in Homo sapiens (Human).